Consider the following 238-residue polypeptide: Ethylene-responsive transcription factor ERN3 (238 aa).

Residues 24 to 81 (KFVGVRQRASGKWAAEIKDTSKNIRMWLGTYKTAEEAARAYDEAAFLLRGTNTRTNFS) constitute a DNA-binding region (AP2/ERF).

The protein belongs to the AP2/ERF transcription factor family. ERF subfamily. As to expression, expressed in roots, root hairs and leaves.

Its subcellular location is the nucleus. Its function is as follows. Transcription factor involved in symbiotic nodule signaling in response to rhizobial Nod factors (NFs). Binds to the GCC box (NF-responsive box) of ENOD11 promoter. May act as transcriptional repressor of NF-responsive box-containing target gene promoters in root hairs. This chain is Ethylene-responsive transcription factor ERN3, found in Medicago truncatula (Barrel medic).